The following is a 24-amino-acid chain: Pseudin-2 (24 aa).

Expressed by the skin glands.

Its subcellular location is the secreted. Functionally, antimicrobial peptide with activity against fungus (C.albicans) and Gram-positive and Gram-negative bacteria (S.aureus and E.coli). Also has low hemolytic activity against human erythrocytes. In Pseudis paradoxa (Paradoxical frog), this protein is Pseudin-2.